The following is a 79-amino-acid chain: Small ribosomal subunit protein bS16 (79 aa).

The protein belongs to the bacterial ribosomal protein bS16 family.

In Buchnera aphidicola subsp. Acyrthosiphon pisum (strain 5A), this protein is Small ribosomal subunit protein bS16.